A 663-amino-acid polypeptide reads, in one-letter code: Rho GTPase-activating protein 18 (663 aa).

Residues Tyr-15 to Ser-37 form a disordered region. Phosphoserine is present on residues Ser-66 and Ser-69. Thr-158 bears the Phosphothreonine mark. 2 disordered regions span residues Arg-179 to Glu-227 and Gln-243 to Gly-277. Composition is skewed to basic and acidic residues over residues Asn-197 to Pro-219 and Glu-245 to Asp-258. Ser-263 is modified (phosphoserine). The Rho-GAP domain maps to Val-324–Trp-523. Ser-610 is subject to Phosphoserine.

In terms of assembly, interacts with MPHOSPH6.

The protein localises to the cytoplasm. Its function is as follows. Rho GTPase activating protein that suppresses F-actin polymerization by inhibiting Rho. Rho GTPase activating proteins act by converting Rho-type GTPases to an inactive GDP-bound state. Plays a key role in tissue tension and 3D tissue shape by regulating cortical actomyosin network formation. Acts downstream of YAP1 and inhibits actin polymerization, which in turn reduces nuclear localization of YAP1. Regulates cell shape, spreading, and migration. The sequence is that of Rho GTPase-activating protein 18 from Homo sapiens (Human).